The chain runs to 542 residues: Keratin, type II cytoskeletal 75 (542 aa).

Residues 1–26 show a composition bias toward polar residues; it reads MSRQSTVTFHSGSRRGFSTASATTPT. The disordered stretch occupies residues 1–44; that stretch reads MSRQSTVTFHSGSRRGFSTASATTPTAGRSRFSSVSVARSSGNS. Residues 1 to 139 form a head region; sequence MSRQSTVTFH…DPTIQRVRKE (139 aa). The span at 27–42 shows a compositional bias: low complexity; the sequence is AGRSRFSSVSVARSSG. A coil 1A region spans residues 140-175; the sequence is EREQIKTLNNKFASFIDKVRFLEQQNKVLETKWNLL. Positions 140–453 constitute an IF rod domain; the sequence is EREQIKTLNN…KLLEGEECRL (314 aa). Residues 176 to 194 form a linker 1 region; that stretch reads QEQGSRTVRQNLEPFFDAY. The interval 195–287 is coil 1B; that stretch reads VNDLRRQLDS…VYEAELSQMQ (93 aa). Residues 288–310 form a linker 12 region; the sequence is NQVSDTSVVLSMDNNRSLDLDSI. Residues 311 to 449 form a coil 2 region; sequence IAEVKAQYED…ATYRKLLEGE (139 aa). Residues 450–542 form a tail region; sequence ECRLSGEGVS…TSSSRKSYKH (93 aa). A disordered region spans residues 514-542; it reads TSSSRGPVGSGSSIKFVSSTSSSRKSYKH.

The protein belongs to the intermediate filament family. Heterodimer of a type I and a type II keratin. May associate with KRT17.

In terms of biological role, plays a central role in hair and nail formation. Essential component of keratin intermediate filaments in the companion layer of the hair follicle. This Rattus norvegicus (Rat) protein is Keratin, type II cytoskeletal 75 (Krt75).